We begin with the raw amino-acid sequence, 275 residues long: Ribosomal RNA small subunit methyltransferase A (275 aa).

S-adenosyl-L-methionine-binding residues include Asn-21, Leu-23, Gly-48, Glu-69, Asp-94, and Asn-115.

It belongs to the class I-like SAM-binding methyltransferase superfamily. rRNA adenine N(6)-methyltransferase family. RsmA subfamily.

The protein localises to the cytoplasm. It carries out the reaction adenosine(1518)/adenosine(1519) in 16S rRNA + 4 S-adenosyl-L-methionine = N(6)-dimethyladenosine(1518)/N(6)-dimethyladenosine(1519) in 16S rRNA + 4 S-adenosyl-L-homocysteine + 4 H(+). Functionally, specifically dimethylates two adjacent adenosines (A1518 and A1519) in the loop of a conserved hairpin near the 3'-end of 16S rRNA in the 30S particle. May play a critical role in biogenesis of 30S subunits. The sequence is that of Ribosomal RNA small subunit methyltransferase A from Clostridium botulinum (strain Okra / Type B1).